A 1277-amino-acid chain; its full sequence is DNA repair protein RAD5B (1277 aa).

The interval 271–293 (KLEQENDDLFSSGDSDGTSAKRR) is disordered. Residues 674-871 (PTATQMARGG…YSLLCFLHVE (198 aa)) form the Helicase ATP-binding domain. 687–694 (DAMGLGKT) contacts ATP. A DEAH box motif is present at residues 822-825 (DEAH). An RING-type zinc finger spans residues 1040 to 1080 (CPICLESADDPVLTPCAHRMCRECLLTSWRSPSCGLCPICR). Positions 1113-1277 (ELLKCLEKIK…RLEELKMLFR (165 aa)) constitute a Helicase C-terminal domain.

It belongs to the SNF2/RAD54 helicase family. RAD16 subfamily.

The protein localises to the nucleus. Possesses intrinsic ATP-dependent nucleosome-remodeling activity. This activity may be required for DNA repair. Does not seem to be required for DNA repair and regulation of homologous recombination (HR). The polypeptide is DNA repair protein RAD5B (Arabidopsis thaliana (Mouse-ear cress)).